The sequence spans 237 residues: Methylosome subunit pICln (237 aa).

Ser2 is modified (N-acetylserine). Phosphoserine occurs at positions 102, 144, 193, and 195. Thr223 bears the Phosphothreonine mark.

The protein belongs to the pICln (TC 1.A.47) family. As to quaternary structure, component of the methylosome, a 20S complex containing at least PRMT5/SKB1, WDR77/MEP50 and CLNS1A/pICln. May mediate SNRPD1 and SNRPD3 methylation. Forms a 6S pICln-Sm complex composed of CLNS1A/pICln, SNRPD1, SNRPD2, SNRPE, SNRPF and SNRPG; ring-like structure where CLNS1A/pICln mimics additional Sm proteins and which is unable to assemble into the core snRNP. Interacts with LSM10 and LSM11.

The protein localises to the cytoplasm. Its subcellular location is the cytosol. It is found in the nucleus. The protein resides in the cytoskeleton. In terms of biological role, involved in both the assembly of spliceosomal snRNPs and the methylation of Sm proteins. Chaperone that regulates the assembly of spliceosomal U1, U2, U4 and U5 small nuclear ribonucleoproteins (snRNPs), the building blocks of the spliceosome, and thereby plays an important role in the splicing of cellular pre-mRNAs. Most spliceosomal snRNPs contain a common set of Sm proteins SNRPB, SNRPD1, SNRPD2, SNRPD3, SNRPE, SNRPF and SNRPG that assemble in a heptameric protein ring on the Sm site of the small nuclear RNA to form the core snRNP (Sm core). In the cytosol, the Sm proteins SNRPD1, SNRPD2, SNRPE, SNRPF and SNRPG are trapped in an inactive 6S pICln-Sm complex by the chaperone CLNS1A that controls the assembly of the core snRNP. Dissociation by the SMN complex of CLNS1A from the trapped Sm proteins and their transfer to an SMN-Sm complex triggers the assembly of core snRNPs and their transport to the nucleus. This chain is Methylosome subunit pICln (CLNS1A), found in Pongo abelii (Sumatran orangutan).